Reading from the N-terminus, the 192-residue chain is uncharacterized protein (192 aa).

Residues 29–160 (QRQAAVLIPV…PLDVYRRGNS (132 aa)) enclose the Nudix hydrolase domain. The short motif at 67 to 89 (GAVDSTDASLIAAALREAQEEVA) is the Nudix box element. Mg(2+) is bound by residues Glu-83 and Glu-87.

The protein belongs to the Nudix hydrolase family. PCD1 subfamily. Mn(2+) serves as cofactor. It depends on Mg(2+) as a cofactor.

Its function is as follows. Probably mediates the hydrolysis of some nucleoside diphosphate derivatives. This is an uncharacterized protein from Salmonella choleraesuis (strain SC-B67).